An 803-amino-acid polypeptide reads, in one-letter code: Elongation factor G, mitochondrial (803 aa).

The N-terminal 24 residues, methionine 1–proline 24, are a transit peptide targeting the mitochondrion. Positions serine 102–serine 388 constitute a tr-type G domain. Residues alanine 111 to threonine 118, aspartate 186 to histidine 190, and asparagine 240 to aspartate 243 each bind GTP.

The protein belongs to the TRAFAC class translation factor GTPase superfamily. Classic translation factor GTPase family. EF-G/EF-2 subfamily.

It is found in the mitochondrion. The protein operates within protein biosynthesis; polypeptide chain elongation. Functionally, mitochondrial GTPase that catalyzes the GTP-dependent ribosomal translocation step during translation elongation. During this step, the ribosome changes from the pre-translocational (PRE) to the post-translocational (POST) state as the newly formed A-site-bound peptidyl-tRNA and P-site-bound deacylated tRNA move to the P and E sites, respectively. Catalyzes the coordinated movement of the two tRNA molecules, the mRNA and conformational changes in the ribosome. This is Elongation factor G, mitochondrial (mef1) from Talaromyces marneffei (strain ATCC 18224 / CBS 334.59 / QM 7333) (Penicillium marneffei).